The sequence spans 450 residues: Beta-glucosidase (450 aa).

Glu-166 functions as the Proton donor in the catalytic mechanism. Glu-355 acts as the Nucleophile in catalysis.

This sequence belongs to the glycosyl hydrolase 1 family.

The catalysed reaction is Hydrolysis of terminal, non-reducing beta-D-glucosyl residues with release of beta-D-glucose.. This Niallia circulans (Bacillus circulans) protein is Beta-glucosidase (bglA).